The following is a 432-amino-acid chain: Asparagine--tRNA ligase (432 aa).

The protein belongs to the class-II aminoacyl-tRNA synthetase family. In terms of assembly, homodimer.

It is found in the cytoplasm. The enzyme catalyses tRNA(Asn) + L-asparagine + ATP = L-asparaginyl-tRNA(Asn) + AMP + diphosphate + H(+). The polypeptide is Asparagine--tRNA ligase (Lacticaseibacillus paracasei (strain ATCC 334 / BCRC 17002 / CCUG 31169 / CIP 107868 / KCTC 3260 / NRRL B-441) (Lactobacillus paracasei)).